We begin with the raw amino-acid sequence, 457 residues long: Glutamate--tRNA ligase 1 (457 aa).

Residues P9–N19 carry the 'HIGH' region motif. Residues G250–R254 carry the 'KMSKS' region motif. K253 contacts ATP.

The protein belongs to the class-I aminoacyl-tRNA synthetase family. Glutamate--tRNA ligase type 1 subfamily. In terms of assembly, monomer.

Its subcellular location is the cytoplasm. The enzyme catalyses tRNA(Glu) + L-glutamate + ATP = L-glutamyl-tRNA(Glu) + AMP + diphosphate. Catalyzes the attachment of glutamate to tRNA(Glu) in a two-step reaction: glutamate is first activated by ATP to form Glu-AMP and then transferred to the acceptor end of tRNA(Glu). The sequence is that of Glutamate--tRNA ligase 1 from Brucella ovis (strain ATCC 25840 / 63/290 / NCTC 10512).